Here is a 383-residue protein sequence, read N- to C-terminus: Ribosomal RNA large subunit methyltransferase G (383 aa).

It belongs to the methyltransferase superfamily. RlmG family.

It is found in the cytoplasm. It carries out the reaction guanosine(1835) in 23S rRNA + S-adenosyl-L-methionine = N(2)-methylguanosine(1835) in 23S rRNA + S-adenosyl-L-homocysteine + H(+). Functionally, specifically methylates the guanine in position 1835 (m2G1835) of 23S rRNA. The sequence is that of Ribosomal RNA large subunit methyltransferase G from Vibrio atlanticus (strain LGP32) (Vibrio splendidus (strain Mel32)).